Here is an 89-residue protein sequence, read N- to C-terminus: MSLIEKLFGKRQKTASIARERLQIILAHERNGRAEPDYLPQLQQELIAVISKYVKIAPEDIKVQLERQDDLEVLEVNIVLPEPQQRTVA.

This sequence belongs to the MinE family.

Prevents the cell division inhibition by proteins MinC and MinD at internal division sites while permitting inhibition at polar sites. This ensures cell division at the proper site by restricting the formation of a division septum at the midpoint of the long axis of the cell. This chain is Cell division topological specificity factor, found in Laribacter hongkongensis (strain HLHK9).